Reading from the N-terminus, the 246-residue chain is UDP-N-acetyl-D-mannosaminuronic acid transferase (246 aa).

Belongs to the glycosyltransferase 26 family.

It catalyses the reaction UDP-N-acetyl-alpha-D-mannosaminouronate + N-acetyl-alpha-D-glucosaminyl-di-trans,octa-cis-undecaprenyl diphosphate = beta-D-ManNAcA-(1-&gt;4)-alpha-D-GlcNAc-di-trans,octa-cis-undecaprenyl diphosphate + UDP + H(+). The protein operates within bacterial outer membrane biogenesis; enterobacterial common antigen biosynthesis. Functionally, catalyzes the synthesis of Und-PP-GlcNAc-ManNAcA (Lipid II), the second lipid-linked intermediate involved in enterobacterial common antigen (ECA) synthesis. This is UDP-N-acetyl-D-mannosaminuronic acid transferase from Serratia proteamaculans (strain 568).